A 524-amino-acid chain; its full sequence is Cytochrome P450 monooxygenase ankB (524 aa).

Residues 22 to 42 (FHALSIQAPGLLLGTLLFYLF) traverse the membrane as a helical segment. Cys-466 provides a ligand contact to heme.

This sequence belongs to the cytochrome P450 family. Heme serves as cofactor.

It is found in the membrane. The enzyme catalyses cyclo(L-arginyl-tyrosyl) + reduced [NADPH--hemoprotein reductase] + O2 = cyclo(L-arginyl-L-dehydrotyrosyl) + oxidized [NADPH--hemoprotein reductase] + 2 H2O + H(+). The protein operates within alkaloid biosynthesis. Its function is as follows. Cytochrome P450 monooxygenase; part of the ank cluster that mediates the biosynthesis of NK13650 C, a highly modified cyclo-arginine-tyrosine dipeptide. AnkB is responsible for desaturation of the ankA product cyclo-Arg-Tyr diketopiperazine, likely through hydroxylation of the benzylic position followed by dehydration to yield a dehydro-cyclodipeptide. Within the pathway, the cyclodipeptide synthase ankA acts as the scaffold-generating enzyme and is responsible for formation of the cyclo-Arg-Tyr diketopiperazine (cRY) from L-Arg and L-Tyr. The ankA product cRY is desaturated by the cytochrome P450 monooxygenase ankB to yield a dehydro-cyclodipeptide intermediate. The FAD-dependent monooxygenase ankC then installs the m-OH, ankD catalyzes the attachment of L-homoserine, and ankE ligates citrate to the ankD product to yield NK13650 B. The O-methyltransferase ankF is responsible for methylation of the C-17 phenol group of NK13650 B to produce NK13650 D. Amidation of NK13650 D with L-Asp by ankG then leads to the production of NK13650 C, whereas amidation of NK13650 B produces NK13650 A. The chain is Cytochrome P450 monooxygenase ankB from Aspergillus thermomutatus (Neosartorya pseudofischeri).